The following is a 445-amino-acid chain: UPF0210 protein SUB1511 (445 aa).

This sequence belongs to the UPF0210 family. As to quaternary structure, homodimer.

The chain is UPF0210 protein SUB1511 from Streptococcus uberis (strain ATCC BAA-854 / 0140J).